Here is a 558-residue protein sequence, read N- to C-terminus: Dihydroxy-acid dehydratase (558 aa).

[2Fe-2S] cluster is bound at residue Cys50. Asp82 provides a ligand contact to Mg(2+). [2Fe-2S] cluster is bound at residue Cys123. Positions 124 and 125 each coordinate Mg(2+). Position 125 is an N6-carboxylysine (Lys125). A [2Fe-2S] cluster-binding site is contributed by Cys195. Mg(2+) is bound at residue Glu447. The Proton acceptor role is filled by Ser472.

It belongs to the IlvD/Edd family. As to quaternary structure, homodimer. [2Fe-2S] cluster serves as cofactor. Mg(2+) is required as a cofactor.

The enzyme catalyses (2R)-2,3-dihydroxy-3-methylbutanoate = 3-methyl-2-oxobutanoate + H2O. The catalysed reaction is (2R,3R)-2,3-dihydroxy-3-methylpentanoate = (S)-3-methyl-2-oxopentanoate + H2O. Its pathway is amino-acid biosynthesis; L-isoleucine biosynthesis; L-isoleucine from 2-oxobutanoate: step 3/4. It functions in the pathway amino-acid biosynthesis; L-valine biosynthesis; L-valine from pyruvate: step 3/4. Functionally, functions in the biosynthesis of branched-chain amino acids. Catalyzes the dehydration of (2R,3R)-2,3-dihydroxy-3-methylpentanoate (2,3-dihydroxy-3-methylvalerate) into 2-oxo-3-methylpentanoate (2-oxo-3-methylvalerate) and of (2R)-2,3-dihydroxy-3-methylbutanoate (2,3-dihydroxyisovalerate) into 2-oxo-3-methylbutanoate (2-oxoisovalerate), the penultimate precursor to L-isoleucine and L-valine, respectively. This is Dihydroxy-acid dehydratase from Saccharolobus islandicus (strain L.S.2.15 / Lassen #1) (Sulfolobus islandicus).